Reading from the N-terminus, the 502-residue chain is uncharacterized protein (502 aa).

This is an uncharacterized protein from Agrobacterium vitis (Rhizobium vitis).